A 729-amino-acid polypeptide reads, in one-letter code: Alpha-galactosidase AgaA (729 aa).

Residues aspartate 53, tryptophan 199, 366–367, arginine 443, 476–480, cysteine 526, and aspartate 548 each bind substrate; these read DD and KWDMN. The active-site Nucleophile is aspartate 478. Residue aspartate 548 is the Proton donor of the active site.

It belongs to the glycosyl hydrolase 36 family. As to quaternary structure, homotetramer.

The enzyme catalyses Hydrolysis of terminal, non-reducing alpha-D-galactose residues in alpha-D-galactosides, including galactose oligosaccharides, galactomannans and galactolipids.. Its activity is regulated as follows. Not inhibited by D-galactose or sucrose. Inhibited by pharmaceutical drug 1-deoxygalactonojirimycin. Its function is as follows. Hydrolyzes the short-chain alpha-galactosaccharides raffinose and stachyose. This is Alpha-galactosidase AgaA from Geobacillus stearothermophilus (Bacillus stearothermophilus).